The primary structure comprises 356 residues: tRNA N6-adenosine threonylcarbamoyltransferase (356 aa).

H116 and H120 together coordinate Fe cation. Substrate-binding positions include 139–143, D174, G187, D191, and N281; that span reads IVSGG. D309 contacts Fe cation.

Belongs to the KAE1 / TsaD family. It depends on Fe(2+) as a cofactor.

It is found in the cytoplasm. It carries out the reaction L-threonylcarbamoyladenylate + adenosine(37) in tRNA = N(6)-L-threonylcarbamoyladenosine(37) in tRNA + AMP + H(+). In terms of biological role, required for the formation of a threonylcarbamoyl group on adenosine at position 37 (t(6)A37) in tRNAs that read codons beginning with adenine. Is involved in the transfer of the threonylcarbamoyl moiety of threonylcarbamoyl-AMP (TC-AMP) to the N6 group of A37, together with TsaE and TsaB. TsaD likely plays a direct catalytic role in this reaction. This is tRNA N6-adenosine threonylcarbamoyltransferase from Frankia alni (strain DSM 45986 / CECT 9034 / ACN14a).